Here is a 509-residue protein sequence, read N- to C-terminus: Ceramide glucosyltransferase (509 aa).

Over 1–42 (MIMQLGLTSLAFLALKCDAYNIAPKIDTPNVEPFAPSGGLKL) the chain is Lumenal. A helical membrane pass occupies residues 43-63 (LAIVAIIWYVVVLLVAYYGFF). Over 64–384 (EIMQKFSKRK…EATLLEPTTE (321 aa)) the chain is Cytoplasmic. A short sequence motif (D1) is located at residue Asp123. A short sequence motif (D2) is located at residue Asp179. Position 321 (Asp321) is a short sequence motif, D3. Residue Asp321 is the Proton acceptor of the active site. The (Q/R)XXRW signature appears at 361–365 (RRIRW). Residues 385–405 (CLLCGTFGTFAISTLFLQSYF) form a helical membrane-spanning segment. At 406 to 408 (NWK) the chain is on the lumenal side. A helical membrane pass occupies residues 409–429 (FFIFHLLVWMVTDYTQFHILL). Topologically, residues 430 to 466 (TNASQDTATCNVPYFAEPNFNAYGSPFESSNLRTFHR) are cytoplasmic. A helical transmembrane segment spans residues 467–487 (WVLYWLLREVLALPIWISAML). The Lumenal segment spans residues 488–509 (GTRIIWRNRPFRINVDLSAEEL).

It belongs to the glycosyltransferase 2 family.

The protein resides in the golgi apparatus membrane. The catalysed reaction is an N-acylsphing-4-enine + UDP-alpha-D-glucose = a beta-D-glucosyl-(1&lt;-&gt;1')-N-acylsphing-4-enine + UDP + H(+). The protein operates within lipid metabolism; sphingolipid metabolism. Functionally, catalyzes the final step in the biosynthesis of the membrane lipid glucosylceramide (GluCer), the transfer of glucose to ceramide. Glucosylceramides play important roles in growth, differentiation and pathogenicity. The chain is Ceramide glucosyltransferase from Komagataella phaffii (strain GS115 / ATCC 20864) (Yeast).